Reading from the N-terminus, the 197-residue chain is Large ribosomal subunit protein uL13B (197 aa).

S193 carries the post-translational modification Phosphoserine.

Belongs to the universal ribosomal protein uL13 family. Component of the large ribosomal subunit (LSU). Mature yeast ribosomes consist of a small (40S) and a large (60S) subunit. The 40S small subunit contains 1 molecule of ribosomal RNA (18S rRNA) and at least 33 different proteins. The large 60S subunit contains 3 rRNA molecules (25S, 5.8S and 5S rRNA) and at least 46 different proteins.

It localises to the cytoplasm. In terms of biological role, component of the ribosome, a large ribonucleoprotein complex responsible for the synthesis of proteins in the cell. The small ribosomal subunit (SSU) binds messenger RNAs (mRNAs) and translates the encoded message by selecting cognate aminoacyl-transfer RNA (tRNA) molecules. The large subunit (LSU) contains the ribosomal catalytic site termed the peptidyl transferase center (PTC), which catalyzes the formation of peptide bonds, thereby polymerizing the amino acids delivered by tRNAs into a polypeptide chain. The nascent polypeptides leave the ribosome through a tunnel in the LSU and interact with protein factors that function in enzymatic processing, targeting, and the membrane insertion of nascent chains at the exit of the ribosomal tunnel. In Schizosaccharomyces pombe (strain 972 / ATCC 24843) (Fission yeast), this protein is Large ribosomal subunit protein uL13B (rpl1601).